Consider the following 517-residue polypeptide: Xyloglucan galactosyltransferase XLT2 (517 aa).

A disordered region spans residues 1-31 (MLPVSNPSSPEHLLKKSRTPDSTTSIDRKNS). Topologically, residues 1–49 (MLPVSNPSSPEHLLKKSRTPDSTTSIDRKNSFNSLHSVGNRSSYIAASR) are cytoplasmic. Residues 20 to 31 (PDSTTSIDRKNS) are compositionally biased toward polar residues. Residues 50–70 (SHCTWLILSLLSLQLILFLTL) traverse the membrane as a helical; Signal-anchor for type II membrane protein segment. Over 71–517 (RSIPFPHRHI…KEQEKWYKWR (447 aa)) the chain is Lumenal. N-linked (GlcNAc...) asparagine glycosylation is found at Asn-250, Asn-288, Asn-377, and Asn-449.

The protein belongs to the glycosyltransferase 47 family. In terms of assembly, interacts with CSLC4, FUT1, XXT2 and XXT5. As to expression, expressed in roots, hypocotyls, cotyledons, leaves, stems and flowers.

Its subcellular location is the golgi apparatus membrane. Functionally, functions in xyloglucan synthesis by adding side chains to the xylosylated glucan backbone. Involved in galactosylating hemicellulose xyloglucan (XyG) at the second position of the XXXG motif to form XLXG. Associates with other xyloglucan-synthesizing enzymes to form multiprotein complexes for xyloglucan synthesis in the Golgi. The polypeptide is Xyloglucan galactosyltransferase XLT2 (Arabidopsis thaliana (Mouse-ear cress)).